A 287-amino-acid chain; its full sequence is Casein kinase II subunit beta-1 (287 aa).

Residues 1–97 form a disordered region; the sequence is MYRDRGTVNS…ESDVSGSDGE (97 aa). Positions 13 to 25 are enriched in basic and acidic residues; it reads EVVDRKRINDALE. Residues 41 to 50 are compositionally biased toward low complexity; the sequence is GTVTAATTTA. Positions 78–97 are enriched in acidic residues; that stretch reads SDDESDTDSEESDVSGSDGE.

This sequence belongs to the casein kinase 2 subunit beta family. In terms of assembly, heterotetramer of two catalytic alpha subunits and two regulatory beta subunits. Interacts with CCA1. Interacts with LHY. Post-translationally, phosphorylated by alpha subunit.

It is found in the cytoplasm. The protein localises to the cytosol. The protein resides in the nucleus. Its function is as follows. Plays a complex role in regulating the basal catalytic activity of the alpha subunit. The tetrameric holoenzyme CK2, composed of two alpha and two beta subunits, phosphorylates the transcription factor GBFl, resulting in stimulation of its DNA binding activity. CK2 phosphorylates the transcription factor PIF1 after an exposure to light, resulting in a proteasome-dependent degradation of PIF1 and promotion of photomorphogenesis. CK2 phosphorylates translation initiation factors. May participate in the regulation of the initiation of translation. Stimulates the binding of CCA1 to promoters. The protein is Casein kinase II subunit beta-1 (CKB1) of Arabidopsis thaliana (Mouse-ear cress).